The primary structure comprises 1352 residues: Patatin-like phospholipase domain-containing protein 7 (1352 aa).

Over 1–36 (MQNEEDACLEAGYCLGTTLSSWRLHFMEEQSQSTML) the chain is Lumenal. A helical transmembrane segment spans residues 37-57 (MGIGIGALLTLAFVGITFFFV). The Cytoplasmic segment spans residues 58–1352 (YRRVRRLRRA…DQGPRLEHPS (1295 aa)). 170-297 (VLGHFEKPLF…VRVVQIIMVR (128 aa)) serves as a coordination point for a nucleoside 3',5'-cyclic phosphate. Residues 340-364 (MSYGPEEQLERSLRPSEFSSSDHGS) form a disordered region. Ser-341 and Ser-379 each carry phosphoserine. Positions 384 to 411 (SNHGEVDELRQSQGSGSNTSAFQESHEG) are disordered. Residues 394-406 (QSQGSGSNTSAFQ) are compositionally biased toward polar residues. A nucleoside 3',5'-cyclic phosphate contacts are provided by residues 499–585 (FLHV…YEIM) and 613–718 (ALDW…LGEK). Positions 681–967 (VHAVRDSELA…RGCAQVGILR (287 aa)) are involved in the binding to lipid droplets. In terms of domain architecture, PNPLA spans 950 to 1116 (LVLGGGGARG…INNLPADVAR (167 aa)). The GXGXXG motif lies at 954–959 (GGGARG). The GXSXG motif lies at 981–985 (GTSIG). Ser-983 (nucleophile) is an active-site residue. Asp-1103 serves as the catalytic Proton acceptor. A DGA/G motif is present at residues 1103–1105 (DGG). Position 1280 is a phosphoserine (Ser-1280). Thr-1284 carries the post-translational modification Phosphothreonine. The tract at residues 1295–1352 (KETYADFQSTGIELDSDSEYEPSMLQGPPSLTSPEQSQDSFPWLPNQDDQGPRLEHPS) is disordered. Polar residues predominate over residues 1323–1334 (PSLTSPEQSQDS).

This sequence belongs to the NTE family. As to expression, expressed in white and brown adipose tissue, cardiac muscle, skeletal muscle, and testis. Expressed in white adipose tissue, cardiac muscle, skeletal muscle, and testis.

The protein localises to the endoplasmic reticulum membrane. It localises to the lipid droplet. The catalysed reaction is a 1-acyl-sn-glycero-3-phosphocholine + H2O = sn-glycerol 3-phosphocholine + a fatty acid + H(+). It catalyses the reaction 1-(9Z-octadecenoyl)-sn-glycero-3-phosphocholine + H2O = sn-glycerol 3-phosphocholine + (9Z)-octadecenoate + H(+). It carries out the reaction 1-(9Z-octadecenoyl)-sn-glycero-3-phosphoethanolamine + H2O = sn-glycero-3-phosphoethanolamine + (9Z)-octadecenoate + H(+). The enzyme catalyses 1-(9Z-octadecenoyl)-sn-glycero-3-phospho-L-serine + H2O = sn-glycero-3-phospho-L-serine + (9Z)-octadecenoate + H(+). The catalysed reaction is 1-hexadecanoyl-sn-glycero-3-phosphocholine + H2O = sn-glycerol 3-phosphocholine + hexadecanoate + H(+). It catalyses the reaction 1-hexadecanoyl-sn-glycero-3-phosphate + H2O = sn-glycerol 3-phosphate + hexadecanoate + H(+). With respect to regulation, cAMP does not regulate lysophospholipase activity in vitro. Slightly inhibited by organophosphorus (OP) compounds such as mipafox, which is likely why mice are less sensitive to distal axonophathy induced by OPs compared to humans. Functionally, lysophospholipase which preferentially deacylates unsaturated lysophosphatidylcholine (C18:1), generating glycerophosphocholine. Can also deacylate, to a lesser extent, lysophosphatidylethanolamine (C18:1), lysophosphatidyl-L-serine (C18:1) and lysophosphatidic acid (C16:0). Lysophospholipase. Its function is as follows. Lacks lysophospholipase activity. The polypeptide is Patatin-like phospholipase domain-containing protein 7 (Pnpla7) (Mus musculus (Mouse)).